The following is an 840-amino-acid chain: Phosphatidylglycerol lysyltransferase (840 aa).

Topologically, residues 1–8 are cytoplasmic; the sequence is MTQELKSK. The chain crosses the membrane as a helical span at residues 9-29; it reads LLSFFKFIFATALFIFVIFTL. Over 30-52 the chain is Extracellular; sequence YRELSHINFKETFIQFGKINRLW. Residues 53–73 traverse the membrane as a helical segment; that stretch reads LVLLFAGGGLSLILLSLYDII. Residues 74–89 are Cytoplasmic-facing; that stretch reads LVKALKLKMPLIRVFR. Residues 90 to 110 form a helical membrane-spanning segment; the sequence is VSYIINALNSIIGFGGFIGAG. Over 111 to 129 the chain is Extracellular; that stretch reads VRAFVYKNYTNDTKKLVQY. The helical transmembrane segment at 130–150 threads the bilayer; it reads ISIILVSMLTGLSLLSILVVL. Topologically, residues 151 to 161 are cytoplasmic; that stretch reads RIFNASHMIDE. Residues 162–182 form a helical membrane-spanning segment; it reads ISWVRWILYIVALFLPIFIFY. Residues 183-200 are Extracellular-facing; that stretch reads TVARPVDRNNRYMGVYCT. Residues 201–221 form a helical membrane-spanning segment; that stretch reads VVSCVEWMAAATVLYFAALIV. The Cytoplasmic portion of the chain corresponds to 222-229; the sequence is DIHISFMT. A helical membrane pass occupies residues 230-250; sequence FVGIFVIAALSGLVSFIPGGF. At 251 to 270 the chain is on the extracellular side; the sequence is GAFDLVVLLGLKSLGISEEK. Residues 271–291 traverse the membrane as a helical segment; the sequence is ILLALVLYRFAYYFVPVMIAL. At 292–337 the chain is on the cytoplasmic side; that stretch reads ILSSFEFGNTAKKYLDNSKYFIPVKDFTSFLRSYQKDILAKVPSFS. Residues 338–358 traverse the membrane as a helical segment; sequence LAILIFLTSIIFFINNLTIVY. The Extracellular portion of the chain corresponds to 359–366; the sequence is DGLYDGNH. A helical transmembrane segment spans residues 367 to 387; the sequence is FAYYIALAIQTSACLLLILNV. Over 388 to 392 the chain is Cytoplasmic; it reads RGIYK. Residues 393-413 form a helical membrane-spanning segment; the sequence is GSRRAIIYAFISIILIASATI. Residues 414–415 lie on the Extracellular side of the membrane; the sequence is YT. A helical membrane pass occupies residues 416-436; that stretch reads YASFLLLSWLIIIFVLLILAY. Residues 437-450 lie on the Cytoplasmic side of the membrane; the sequence is QRAQVLKRPLRFKK. A helical transmembrane segment spans residues 451-471; it reads LAFMLLLSIFILYLNHILISG. Residues 472–489 lie on the Extracellular side of the membrane; sequence TLYALDVYHIEIDTSLLR. A helical membrane pass occupies residues 490 to 510; that stretch reads YYFWMTIVIIMLLVGVIAWLF. At 511 to 840 the chain is on the cytoplasmic side; the sequence is DYKYKRPHHS…LKVMRVIRHK (330 aa).

The protein belongs to the LPG synthase family.

It localises to the cell membrane. The catalysed reaction is L-lysyl-tRNA(Lys) + a 1,2-diacyl-sn-glycero-3-phospho-(1'-sn-glycerol) = a 1,2-diacyl-sn-glycero-3-phospho-1'-(3'-O-L-lysyl)-sn-glycerol + tRNA(Lys). Its function is as follows. Catalyzes the transfer of a lysyl group from L-lysyl-tRNA(Lys) to membrane-bound phosphatidylglycerol (PG), which produces lysylphosphatidylglycerol (LPG), a major component of the bacterial membrane with a positive net charge. LPG synthesis contributes to bacterial virulence as it is involved in the resistance mechanism against cationic antimicrobial peptides (CAMP) produces by the host's immune system (defensins, cathelicidins) and by the competing microorganisms (bacteriocins). In fact, the modification of anionic phosphatidylglycerol with positively charged L-lysine results in repulsion of the peptides. In Staphylococcus epidermidis (strain ATCC 35984 / DSM 28319 / BCRC 17069 / CCUG 31568 / BM 3577 / RP62A), this protein is Phosphatidylglycerol lysyltransferase (mprF).